Consider the following 811-residue polypeptide: Probable inorganic carbon transporter subunit DabA (811 aa).

Zn(2+)-binding residues include Cys-336, Asp-338, His-498, and Cys-513.

This sequence belongs to the inorganic carbon transporter (TC 9.A.2) DabA family. As to quaternary structure, forms a complex with DabB. Requires Zn(2+) as cofactor.

It is found in the cell inner membrane. Part of an energy-coupled inorganic carbon pump. The polypeptide is Probable inorganic carbon transporter subunit DabA (Rhodospirillum centenum (strain ATCC 51521 / SW)).